A 231-amino-acid chain; its full sequence is Fibrillarin-like rRNA/tRNA 2'-O-methyltransferase (231 aa).

Residues 88–89, 106–107, 131–132, and 151–154 each bind S-adenosyl-L-methionine; these read TT, EF, DA, and DVAQ.

This sequence belongs to the methyltransferase superfamily. Fibrillarin family. In terms of assembly, interacts with nop5. Component of box C/D small ribonucleoprotein (sRNP) particles that contain rpl7ae, FlpA and nop5, plus a guide RNA.

Its function is as follows. Involved in pre-rRNA and tRNA processing. Utilizes the methyl donor S-adenosyl-L-methionine to catalyze the site-specific 2'-hydroxyl methylation of ribose moieties in rRNA and tRNA. Site specificity is provided by a guide RNA that base pairs with the substrate. Methylation occurs at a characteristic distance from the sequence involved in base pairing with the guide RNA. In Methanococcus aeolicus (strain ATCC BAA-1280 / DSM 17508 / OCM 812 / Nankai-3), this protein is Fibrillarin-like rRNA/tRNA 2'-O-methyltransferase.